The following is a 374-amino-acid chain: DNA-directed RNA polymerase subunit alpha (374 aa).

Residues 1-257 (MSDNAHNLLY…KHFSIFENMD (257 aa)) are alpha N-terminal domain (alpha-NTD). The tract at residues 274 to 374 (KDDILHKLIL…EKIRAKNIKG (101 aa)) is alpha C-terminal domain (alpha-CTD).

This sequence belongs to the RNA polymerase alpha chain family. As to quaternary structure, homodimer. The RNAP catalytic core consists of 2 alpha, 1 beta, 1 beta' and 1 omega subunit. When a sigma factor is associated with the core the holoenzyme is formed, which can initiate transcription.

The catalysed reaction is RNA(n) + a ribonucleoside 5'-triphosphate = RNA(n+1) + diphosphate. DNA-dependent RNA polymerase catalyzes the transcription of DNA into RNA using the four ribonucleoside triphosphates as substrates. The protein is DNA-directed RNA polymerase subunit alpha of Chlamydia pneumoniae (Chlamydophila pneumoniae).